The primary structure comprises 119 residues: Ribonuclease (119 aa).

The substrate site is built by Lys-6 and Arg-9. Residue His-11 is the Proton acceptor of the active site. 3 cysteine pairs are disulfide-bonded: Cys-26-Cys-81, Cys-40-Cys-92, and Cys-58-Cys-107. Substrate is bound by residues 41 to 45 (KFTNT) and Arg-82. His-114 serves as the catalytic Proton donor.

Belongs to the pancreatic ribonuclease family. Monomer. Interacts with and forms tight 1:1 complexes with RNH1. Dimerization of two such complexes may occur. Interaction with RNH1 inhibits this protein.

The protein localises to the secreted. The catalysed reaction is an [RNA] containing cytidine + H2O = an [RNA]-3'-cytidine-3'-phosphate + a 5'-hydroxy-ribonucleotide-3'-[RNA].. The enzyme catalyses an [RNA] containing uridine + H2O = an [RNA]-3'-uridine-3'-phosphate + a 5'-hydroxy-ribonucleotide-3'-[RNA].. In terms of biological role, endonuclease that catalyzes the cleavage of RNA on the 3' side of pyrimidine nucleotides. Acts on single-stranded and double-stranded RNA. This chain is Ribonuclease, found in Chelonia mydas (Green sea-turtle).